Reading from the N-terminus, the 343-residue chain is Phenylalanine--tRNA ligase alpha subunit (343 aa).

E268 contributes to the Mg(2+) binding site.

Belongs to the class-II aminoacyl-tRNA synthetase family. Phe-tRNA synthetase alpha subunit type 1 subfamily. As to quaternary structure, tetramer of two alpha and two beta subunits. Mg(2+) is required as a cofactor.

The protein resides in the cytoplasm. The catalysed reaction is tRNA(Phe) + L-phenylalanine + ATP = L-phenylalanyl-tRNA(Phe) + AMP + diphosphate + H(+). This Cupriavidus taiwanensis (strain DSM 17343 / BCRC 17206 / CCUG 44338 / CIP 107171 / LMG 19424 / R1) (Ralstonia taiwanensis (strain LMG 19424)) protein is Phenylalanine--tRNA ligase alpha subunit.